We begin with the raw amino-acid sequence, 705 residues long: Crooked neck-like protein 1 (705 aa).

14 HAT repeats span residues 55-87, 89-121, 123-155, 157-188, 190-221, 223-258, 260-294, 304-336, 338-372, 382-418, 420-451, 453-485, 487-521, and 523-554; these read DYRL…WEES, KDLT…MEMK, KNIN…MEDM, GNYP…FEQR, KLFE…FEER, GNIE…FEEK, KEIE…FEKQ, VVLG…MEEI, GEIE…LWIN, KDME…FEIR, LNLD…LEIE, GNFD…LETE, GETV…SEIQ, and KQFD…FVHS. The tract at residues 559-591 is disordered; it reads QQQKQRQQQQEEDGDSNTTKKDGGDDDNNDDIN. An HAT 15 repeat occupies 597–629; sequence IFIEAHKSLSNSDKEERLLLLESWKEFEQTFGN.

Belongs to the crooked-neck family. As to quaternary structure, identified in the spliceosome C complex.

It is found in the nucleus. It localises to the nucleus speckle. Functionally, involved in pre-mRNA splicing process. This chain is Crooked neck-like protein 1 (crnkl1), found in Dictyostelium discoideum (Social amoeba).